The sequence spans 168 residues: HTH-type transcriptional regulator IscR (168 aa).

One can recognise an HTH rrf2-type domain in the interval 2–131; it reads KLTSKGRYAV…DGISLGELMV (130 aa). A DNA-binding region (H-T-H motif) is located at residues 28–51; it reads LADISERQGISLSYLEQLFSKLRK. [2Fe-2S] cluster-binding residues include C92, C98, and C104.

[2Fe-2S] cluster serves as cofactor.

Its function is as follows. Regulates the transcription of several operons and genes involved in the biogenesis of Fe-S clusters and Fe-S-containing proteins. The polypeptide is HTH-type transcriptional regulator IscR (Aliivibrio salmonicida (strain LFI1238) (Vibrio salmonicida (strain LFI1238))).